A 95-amino-acid chain; its full sequence is Heteroscorpine-1 (95 aa).

The signal sequence occupies residues 1–19; it reads MNSKLTALIFLGLVAIASC. A BetaSPN-type CS-alpha/beta domain is found at 55–95; that stretch reads EFQCVANIDTMGNCETHCQKTSGEKGFCHGTKCKCGKPLSY. Cystine bridges form between C58/C82, C68/C87, and C72/C89.

The protein belongs to the long chain scorpion toxin family. Class 3 subfamily. Contains 3 disulfide bonds. Expressed by the venom gland.

It localises to the secreted. Its function is as follows. Has antibacterial activity against B.subtilis, K.pneumoniae and P.aeruginosa. This Heterometrus laoticus (Thai giant scorpion) protein is Heteroscorpine-1.